A 95-amino-acid polypeptide reads, in one-letter code: MLYKGCLMKSDVQLNLRAKESQRALIDAAAEILHKSRTDFILETACQAAEKVILDRRVFNFNDEQYEEFINLLDAPVADDPVIEKLLARKPQWDV.

The interval 59-95 (FNFNDEQYEEFINLLDAPVADDPVIEKLLARKPQWDV) is neutralization domain.

It belongs to the TacA antitoxin family. As to quaternary structure, homodimer. Forms a complex with cognate toxin TacT1. Forms a 4:2 antitoxin:toxin complex with cognate toxin TacT1.

Functionally, antitoxin component of a type II toxin-antitoxin (TA) system. Counteracts the toxic effect of cognate toxin TacT1 (T8), but not TacT2 or TacT3. Plays a role in persister cell formation. In terms of biological role, the TacA1-TacT1 complex binds (and probably represses) its own promoter DNA but not that of tacA3-tacT3, it does not repress the tacA3-tacT3 promoter. The sequence is that of Antitoxin TacA1 from Salmonella typhimurium (strain 14028s / SGSC 2262).